The chain runs to 828 residues: Periplasmic nitrate reductase (828 aa).

The tat-type signal signal peptide spans 1-31 (MKLSRRSFMKANAVAAAAAAAGLSVPGVARA). Positions 39 to 95 (IKWDKAPCRFCGTGCGVLVGTQQGRVVACQGDPDAPVNRGLNCIKGYFLPKIMYGKD) constitute a 4Fe-4S Mo/W bis-MGD-type domain. 4 residues coordinate [4Fe-4S] cluster: Cys-46, Cys-49, Cys-53, and Cys-81. Mo-bis(molybdopterin guanine dinucleotide) is bound by residues Lys-83, Gln-150, Asn-175, Cys-179, 212-219 (WGANMAEM), 243-247 (STYQH), 262-264 (QSD), Met-372, Gln-376, Asn-482, 508-509 (SD), Lys-531, Asp-558, and 718-727 (TGRVLEHWHT). A substrate-binding site is contributed by Phe-794. Mo-bis(molybdopterin guanine dinucleotide) is bound by residues Asn-802 and Lys-819.

This sequence belongs to the prokaryotic molybdopterin-containing oxidoreductase family. NasA/NapA/NarB subfamily. Component of the periplasmic nitrate reductase NapAB complex composed of NapA and NapB. It depends on [4Fe-4S] cluster as a cofactor. Mo-bis(molybdopterin guanine dinucleotide) is required as a cofactor. In terms of processing, predicted to be exported by the Tat system. The position of the signal peptide cleavage has not been experimentally proven.

The protein resides in the periplasm. It catalyses the reaction 2 Fe(II)-[cytochrome] + nitrate + 2 H(+) = 2 Fe(III)-[cytochrome] + nitrite + H2O. Its function is as follows. Catalytic subunit of the periplasmic nitrate reductase complex NapAB. Receives electrons from NapB and catalyzes the reduction of nitrate to nitrite. In Escherichia coli O157:H7 (strain EC4115 / EHEC), this protein is Periplasmic nitrate reductase.